The sequence spans 984 residues: Mast/stem cell growth factor receptor Kit (984 aa).

Positions 1 to 21 (MEYHWILLCVSLCFTFHPGDT) are cleaved as a signal peptide. The Extracellular portion of the chain corresponds to 22–514 (KPTITPAGTY…RTISHDLFSP (493 aa)). 5 consecutive Ig-like C2-type domains span residues 23–97 (PTIT…ERAS), 98–197 (IYIY…LTVR), 203–300 (PPVI…VWLD), 311–395 (PVNN…ASVN), and 398–498 (FTIF…QAFT). 4 cysteine pairs are disulfide-bonded: cysteine 44–cysteine 87, cysteine 129–cysteine 178, cysteine 144–cysteine 175, and cysteine 226–cysteine 284. N-linked (GlcNAc...) asparagine glycosylation is found at asparagine 227, asparagine 260, asparagine 314, asparagine 351, asparagine 395, asparagine 448, and asparagine 476. The cysteines at positions 421 and 487 are disulfide-linked. A helical transmembrane segment spans residues 515–535 (LLIGSVSAACILCLILIVLFY). Residues 536–984 (KYMQKPKYQI…GTEPFRVQRV (449 aa)) are Cytoplasmic-facing. Tyrosine 558 is a Mg(2+) binding site. Phosphotyrosine; by autocatalysis is present on residues tyrosine 558 and tyrosine 560. Positions 579–926 (LRFGKTLGSG…LSDTTKHIYL (348 aa)) constitute a Protein kinase domain. ATP contacts are provided by residues 586 to 593 (GSGAFGKV), lysine 613, and 661 to 667 (EYCCFGD). 2 positions are modified to phosphotyrosine; by autocatalysis: tyrosine 690 and tyrosine 707. Residues 711–723 (RPSAAGKPSSSSS) are compositionally biased toward low complexity. A disordered region spans residues 711-749 (RPSAAGKPSSSSSSEKRRSLREGSPYVEEDSESEMFDED). A compositionally biased stretch (acidic residues) spans 737–749 (VEEDSESEMFDED). The active-site Proton acceptor is aspartate 781. Residue arginine 785 participates in ATP binding. Mg(2+) contacts are provided by asparagine 786 and aspartate 799. Phosphotyrosine; by autocatalysis occurs at positions 812 and 925. Residues 936-963 (PRGREESSTHSMASQPFNSAGNNSPPSR) form a disordered region. Over residues 944 to 960 (THSMASQPFNSAGNNSP) the composition is skewed to polar residues.

This sequence belongs to the protein kinase superfamily. Tyr protein kinase family. CSF-1/PDGF receptor subfamily. Ubiquitinated. Rapidly ubiquitinated after autophosphorylation induced by kitlg/scf binding, leading to internalization and degradation. In terms of processing, autophosphorylated on tyrosine residues. Phosphorylated tyrosine residues are important for interaction with specific binding partners.

It is found in the cell membrane. It carries out the reaction L-tyrosyl-[protein] + ATP = O-phospho-L-tyrosyl-[protein] + ADP + H(+). Tyrosine-protein kinase that acts as a cell-surface receptor for the cytokine kitlg/scf and plays an essential role in the regulation of cell survival and proliferation, hematopoiesis, stem cell maintenance, gametogenesis, mast cell development, migration and function, and in melanogenesis. This chain is Mast/stem cell growth factor receptor Kit (kit), found in Takifugu rubripes (Japanese pufferfish).